The primary structure comprises 347 residues: Adenine deaminase (347 aa).

Positions 16, 18, and 204 each coordinate Zn(2+). Glu-207 serves as the catalytic Proton donor. Residue Asp-285 coordinates Zn(2+). Asp-286 is a binding site for substrate.

Belongs to the metallo-dependent hydrolases superfamily. Adenosine and AMP deaminases family. Adenine deaminase type 2 subfamily. Zn(2+) is required as a cofactor. In terms of processing, probably ubiquitinated when cells enter quiescence in response to nutrient limitation, since it is specifically degraded via a process requiring the F-box protein SAF1 and components of the SKP1-Cullin-F-box complex.

The protein resides in the cytoplasm. It is found in the nucleus. It carries out the reaction adenine + H2O + H(+) = hypoxanthine + NH4(+). In terms of biological role, catalyzes the hydrolytic deamination of adenine to hypoxanthine. Plays an important role in the purine salvage pathway and in nitrogen catabolism. Also exhibits a low activity towards N(6)-substituted adenines that are commonly known as the plant hormones cytokinins. In Saccharomyces cerevisiae (strain ATCC 204508 / S288c) (Baker's yeast), this protein is Adenine deaminase.